The sequence spans 575 residues: UvrABC system protein C (575 aa).

Residues S16–V94 form the GIY-YIG domain. In terms of domain architecture, UVR spans D204–V239.

Belongs to the UvrC family. Interacts with UvrB in an incision complex.

The protein resides in the cytoplasm. Its function is as follows. The UvrABC repair system catalyzes the recognition and processing of DNA lesions. UvrC both incises the 5' and 3' sides of the lesion. The N-terminal half is responsible for the 3' incision and the C-terminal half is responsible for the 5' incision. The chain is UvrABC system protein C from Shigella dysenteriae serotype 1 (strain Sd197).